The following is a 131-amino-acid chain: Ribosome-binding factor A (131 aa).

This sequence belongs to the RbfA family. In terms of assembly, monomer. Binds 30S ribosomal subunits, but not 50S ribosomal subunits or 70S ribosomes.

The protein resides in the cytoplasm. One of several proteins that assist in the late maturation steps of the functional core of the 30S ribosomal subunit. Associates with free 30S ribosomal subunits (but not with 30S subunits that are part of 70S ribosomes or polysomes). Required for efficient processing of 16S rRNA. May interact with the 5'-terminal helix region of 16S rRNA. The polypeptide is Ribosome-binding factor A (Ruegeria sp. (strain TM1040) (Silicibacter sp.)).